The sequence spans 352 residues: (2E,6E)-farnesyl diphosphate synthase (352 aa).

Isopentenyl diphosphate-binding residues include Lys-43, Arg-46, and His-77. Asp-84 and Asp-88 together coordinate Mg(2+). A DDXXD motif motif is present at residues Asp-84–Asp-88. An isopentenyl diphosphate-binding site is contributed by Arg-94. Positions Asp-236–Gly-240 match the DDXXD motif motif.

This sequence belongs to the FPP/GGPP synthase family. Mg(2+) is required as a cofactor.

It carries out the reaction isopentenyl diphosphate + dimethylallyl diphosphate = (2E)-geranyl diphosphate + diphosphate. It catalyses the reaction isopentenyl diphosphate + (2E)-geranyl diphosphate = (2E,6E)-farnesyl diphosphate + diphosphate. It functions in the pathway isoprenoid biosynthesis; geranyl diphosphate biosynthesis; geranyl diphosphate from dimethylallyl diphosphate and isopentenyl diphosphate: step 1/1. Its pathway is isoprenoid biosynthesis; farnesyl diphosphate biosynthesis; farnesyl diphosphate from geranyl diphosphate and isopentenyl diphosphate. Its function is as follows. Catalyzes the sequential condensations of isopentenyl pyrophosphate (IPP) with dimethylallyl diphosphate (DMAPP) to yield geranyl diphosphate (GPP) and with GPP to yield (2E,6E)-farnesyl diphosphate (E,E-FPP). In Mycobacterium tuberculosis (strain ATCC 25618 / H37Rv), this protein is (2E,6E)-farnesyl diphosphate synthase.